Reading from the N-terminus, the 476-residue chain is MPIFVNTVYCKNILALSMTKKFKTIIDAIGGNIIVNSTILKKLSPYFRTHLRQKYTKNKDPVTRVCLDLDIHSLTSIVIYSYTGKVYIDSHNVVNLLRASILTSVEFIIYTCINFILRDFRKEYCVECYMMGIEYGLSNLLCHTKNFIAKHFLELEDDIIDNFDYLSMKLILESDELNVPDEDFVIKWYIKRRNKLGNLLLLIKNVIRSNYLSPRGINNVKWILDCTKIFHCDKQPRKSYKYPFIEYPMNMDQIIDIFHMCTSTHVGEVVYLIGGWMNNEIHNNAIAVNYISNNWIPIPPMNSPRLYASGIPANNKLYVVGGLPNPTSVERWFHGDAAWVNMPSLLKPRCNPAVASINNVIYVMGGHSETDTTTEYLLPNHDQWQFGPSTYYPHYKSCALVFGRRLFLVGRNAEFYCESSNTWTLIDDPIYPRDNPELIIVDNKLLLIGGFYRESYIDTIEVYNHHTYSWNIWDGK.

Positions 10–90 constitute a BTB domain; sequence CKNILALSMT…SYTGKVYIDS (81 aa). The region spanning 125–218 is the BACK domain; that stretch reads CVECYMMGIE…SNYLSPRGIN (94 aa). Kelch repeat units lie at residues 269–315, 316–359, 361–404, 406–443, and 444–476; these read VVYL…PANN, KLYV…SINN, IYVM…VFGR, LFLVGRNAEFYCESSNTWTLIDDPIYPRDNPELIIVDN, and KLLLIGGFYRESYIDTIEVYNHHTYSWNIWDGK.

Belongs to the orthopoxvirus OPG047 family.

In terms of biological role, might have a role in the suppression of host immune response. This is Immune evasion protein OPG047 (OPG047) from Vaccinia virus (strain Ankara) (VACV).